Reading from the N-terminus, the 522-residue chain is 2-isopropylmalate synthase (522 aa).

One can recognise a Pyruvate carboxyltransferase domain in the interval Val5–His267. Mn(2+) is bound by residues Asp14, His202, His204, and Asn238. The tract at residues Val392–Val522 is regulatory domain.

It belongs to the alpha-IPM synthase/homocitrate synthase family. LeuA type 1 subfamily. As to quaternary structure, homodimer. It depends on Mn(2+) as a cofactor.

It localises to the cytoplasm. The catalysed reaction is 3-methyl-2-oxobutanoate + acetyl-CoA + H2O = (2S)-2-isopropylmalate + CoA + H(+). Its pathway is amino-acid biosynthesis; L-leucine biosynthesis; L-leucine from 3-methyl-2-oxobutanoate: step 1/4. Its function is as follows. Catalyzes the condensation of the acetyl group of acetyl-CoA with 3-methyl-2-oxobutanoate (2-ketoisovalerate) to form 3-carboxy-3-hydroxy-4-methylpentanoate (2-isopropylmalate). The polypeptide is 2-isopropylmalate synthase (Shewanella amazonensis (strain ATCC BAA-1098 / SB2B)).